The primary structure comprises 615 residues: (+)-alpha-pinene synthase TPS2, chloroplastic (615 aa).

A chloroplast-targeting transit peptide spans M1–Q55. 5 residues coordinate (2E)-geranyl diphosphate: R330, D367, D371, R509, and D512. Residues D367 and D371 each contribute to the Mg(2+) site. The short motif at D367 to D371 is the DDXXD motif element. Mg(2+) is bound by residues D512, T516, and E520.

It belongs to the terpene synthase family. Tpsb subfamily. Mg(2+) serves as cofactor. The cofactor is Mn(2+). Requires K(+) as cofactor. As to expression, trichome.

The protein localises to the plastid. The protein resides in the chloroplast. The catalysed reaction is (2E)-geranyl diphosphate = (1R,5R)-alpha-pinene + diphosphate. It catalyses the reaction (2E)-geranyl diphosphate = (1R,5R)-beta-pinene + diphosphate. The enzyme catalyses (2E)-geranyl diphosphate = (4S)-limonene + diphosphate. It carries out the reaction (2E)-geranyl diphosphate = beta-myrcene + diphosphate. Its pathway is secondary metabolite biosynthesis; terpenoid biosynthesis. The protein operates within terpene metabolism; (-)-alpha-pinene biosynthesis; (-)-alpha-pinene from geranyl diphosphate: step 1/1. In terms of biological role, involved in monoterpene (C10) olefins biosynthesis, constituants of cannabinoids and terpenoids-rich resins. Catalyzes mainly the conversion of (2E)-geranyl diphosphate to (+)-alpha-pinene, and also produces minor products such as (-)-limonene, (+)-beta-pinene and beta-myrcene. The sequence is that of (+)-alpha-pinene synthase TPS2, chloroplastic from Cannabis sativa (Hemp).